The sequence spans 185 residues: MINEIKKDTQQRMEKSLETLRTHIAKIRTGRAQPSLLDGIQVEYYGSPTPLRQLANVVAEDARTLAVTVFDRSLISAVEKAILTSDLGLNPSSAGTTIRVPLPPLTEERRRDLIKIVKGEGEQGKIAIRNVRRDANDQIKALLKDKEISEDEERKAQDEIQKITDTFVKKVDEILADKEKELLDF.

It belongs to the RRF family.

Its subcellular location is the cytoplasm. Responsible for the release of ribosomes from messenger RNA at the termination of protein biosynthesis. May increase the efficiency of translation by recycling ribosomes from one round of translation to another. This chain is Ribosome-recycling factor, found in Histophilus somni (strain 2336) (Haemophilus somnus).